Here is a 286-residue protein sequence, read N- to C-terminus: Protoheme IX farnesyltransferase (286 aa).

The next 8 helical transmembrane spans lie at 14-31 (FRLTSTVAFSSGMGYILA), 38-58 (WLNLVLFLIGGFSITVSANII), 94-114 (LFLIAGTVILAVYSTLNALIL), 135-155 (IAVFIGAFPGAFPPMIGWIAV), 165-185 (VLFAIQFLWQFPHFWAIAWVL), 207-227 (TATIIMTYTLCLLPLGFLPYL), 228-248 (FGMSGITSAYIALACGILFFF), and 262-282 (ALLLMFGSFLYLPIVQIAFVL).

It belongs to the UbiA prenyltransferase family. Protoheme IX farnesyltransferase subfamily.

It is found in the cell inner membrane. It catalyses the reaction heme b + (2E,6E)-farnesyl diphosphate + H2O = Fe(II)-heme o + diphosphate. The protein operates within porphyrin-containing compound metabolism; heme O biosynthesis; heme O from protoheme: step 1/1. Functionally, converts heme B (protoheme IX) to heme O by substitution of the vinyl group on carbon 2 of heme B porphyrin ring with a hydroxyethyl farnesyl side group. This Cytophaga hutchinsonii (strain ATCC 33406 / DSM 1761 / CIP 103989 / NBRC 15051 / NCIMB 9469 / D465) protein is Protoheme IX farnesyltransferase.